The primary structure comprises 482 residues: MIQVLLVTICLAAFPYQGSSMILESGNVNDYEVVYPQKVPALPKGAVPQKYEDAMQYEFKVNGEPVVLHLEKNKGLFSKDYSETHYSPDGRKITTNPPVEDHCYYHGHIQNDADSTASISACNGLKGHFKHQGEMYLIEPLKLSDSEAHAVYKYENVEKEDEAPKMCGVTQTNWKSDEPIKASQLVVTAEQQRFPQRYIELVVVADHGMFTKYDSNLDTITTWVHELVNNINEFYRSLNVRVSLTELEIWSNQDLINVQSAAADTLEAFGDWRETDLLNRISHDNAQLLTTIDLDGNTIGLAHVGTMCDPKYSVGIVQDHSAINLLVAVTMAHELGHNLGMDHDGNQCHCGANSSVMGDVLRVGVSYEFSDCNENEYQTYVTDHNPQCILNEPLRTDTVSTPVSGNELLEAGVECDCGAPANPCCDAATCKLRPGAQCAEGLCCDQCRFMKEGTICRMARGDDMDDYCNGISAGCPRNPFHA.

An N-terminal signal peptide occupies residues 1–20 (MIQVLLVTICLAAFPYQGSS). A propeptide spanning residues 21-189 (MILESGNVND…IKASQLVVTA (169 aa)) is cleaved from the precursor. The 197-residue stretch at 197–393 (RYIELVVVAD…HNPQCILNEP (197 aa)) folds into the Peptidase M12B domain. Ca(2+)-binding residues include Glu200 and Asp284. Cystine bridges form between Cys308-Cys388 and Cys348-Cys372. His333 contributes to the Zn(2+) binding site. Glu334 is an active-site residue. Residues His337 and His343 each coordinate Zn(2+). Cys388 and Asn391 together coordinate Ca(2+). Residues 394 to 409 (LRTDTVSTPVSGNELL) constitute a propeptide that is removed on maturation. Positions 401–482 (TPVSGNELLE…AGCPRNPFHA (82 aa)) constitute a Disintegrin domain. 6 cysteine pairs are disulfide-bonded: Cys415/Cys430, Cys417/Cys425, Cys424/Cys447, Cys438/Cys444, Cys443/Cys468, and Cys456/Cys475. Positions 460–462 (RGD) match the Cell attachment site motif.

The protein belongs to the venom metalloproteinase (M12B) family. P-II subfamily. P-IId sub-subfamily. Homodimer; disulfide-linked (disintegrin). Zn(2+) serves as cofactor. As to expression, expressed by the venom gland.

The protein localises to the secreted. Functionally, this recombinant protein hydrolyzes fibronectin, but has no effect on type I gelatin and type I to V collagens. Selectively hydrolyzes the Aalpha-chain of fibrinogen (FGA), but has no effect on fibrin. In terms of biological role, inhibits ADP-induced platelet aggregation. Recombinant metalloproteinase-disintegrin Mt-d-I (393-408): hydrolyzes type I gelatin, type III and V collagens, but has no effect on type I, II, IV collagens and fibronectin. Selectively hydrolyzes the Aalpha-chain of fibrinogen, but has no effect on fibrin. May induce hemorrhage in vascular tissue. Strongly inhibits ADP-induced platelet aggregation. When concentrated, Mt-d-I undergoes autoproteolytic processing into metalloproteinase and disintegrin. The sequence is that of Zinc metalloproteinase/disintegrin from Gloydius brevicauda (Korean slamosa snake).